A 249-amino-acid polypeptide reads, in one-letter code: Uroplakin-3b-like protein 1 (249 aa).

An N-terminal signal peptide occupies residues 1 to 26 (MGPHGKQSVLRMPLLLLLTCVQSGTG). At 27–194 (LESINYAPQL…PGSQGKGTVV (168 aa)) the chain is on the extracellular side. 3 N-linked (GlcNAc...) asparagine glycosylation sites follow: asparagine 63, asparagine 82, and asparagine 133. A helical transmembrane segment spans residues 195-215 (IIAFLSILLAILLVVFLVLVI). Topologically, residues 216–249 (SACLSTSGSSPEEQVRMRHYHTHHMGSLRAERSS) are cytoplasmic.

It belongs to the uroplakin-3 family.

The protein resides in the membrane. This Mus musculus (Mouse) protein is Uroplakin-3b-like protein 1.